We begin with the raw amino-acid sequence, 197 residues long: NADH-quinone oxidoreductase subunit C (197 aa).

Belongs to the complex I 30 kDa subunit family. As to quaternary structure, NDH-1 is composed of 14 different subunits. Subunits NuoB, C, D, E, F, and G constitute the peripheral sector of the complex.

The protein localises to the cell inner membrane. It carries out the reaction a quinone + NADH + 5 H(+)(in) = a quinol + NAD(+) + 4 H(+)(out). NDH-1 shuttles electrons from NADH, via FMN and iron-sulfur (Fe-S) centers, to quinones in the respiratory chain. The immediate electron acceptor for the enzyme in this species is believed to be ubiquinone. Couples the redox reaction to proton translocation (for every two electrons transferred, four hydrogen ions are translocated across the cytoplasmic membrane), and thus conserves the redox energy in a proton gradient. The sequence is that of NADH-quinone oxidoreductase subunit C from Rickettsia prowazekii (strain Madrid E).